The sequence spans 476 residues: Probable cytosolic Fe-S cluster assembly factor GF22738 (476 aa).

The [4Fe-4S] cluster site is built by C23, C68, C71, C74, C187, C243, C395, and C399.

This sequence belongs to the NARF family.

Component of the cytosolic iron-sulfur (Fe/S) protein assembly machinery. Required for maturation of extramitochondrial Fe/S proteins. In Drosophila ananassae (Fruit fly), this protein is Probable cytosolic Fe-S cluster assembly factor GF22738.